Reading from the N-terminus, the 543-residue chain is Phosphatidylinositol/phosphatidylcholine transfer protein SFH12 (543 aa).

Residues Glu-120–Asp-294 enclose the CRAL-TRIO domain. Positions His-316–Glu-356 are disordered. Residues Asp-490–Leu-526 adopt a coiled-coil conformation.

It belongs to the SFH family. As to expression, specifically expressed in flowers.

The protein resides in the golgi apparatus membrane. Its subcellular location is the cell membrane. In terms of biological role, required for transport of secretory proteins from the Golgi complex. Catalyzes the transfer of phosphatidylinositol and phosphatidylcholine between membranes in vitro. This is Phosphatidylinositol/phosphatidylcholine transfer protein SFH12 (SFH12) from Arabidopsis thaliana (Mouse-ear cress).